A 268-amino-acid polypeptide reads, in one-letter code: MKYAVIGDPVSHSLSPVMHQVNFKSLNMEDTYEALHIPTQDFHDIRHIIEDNHINGFNVTIPHKERIIPYLDEINDQAKAVGAVNTVKIINNKWIGYNTDGIGYVMGLKQVYPDLENAYVLILGAGGASKGIANELSKIVQPKLTIANRTMSRFETWDMDINAISLEQSEQYLDEFDIIINTTSAGLNNNDDIVISLDNLSSSTLVSDIIYIPYKTKFLKEAEFKGNTVYNGLDMFINQGAESFKIWTGKQPNILEMKYAVLNKLKGV.

Shikimate is bound by residues 13–15 (SLS) and Thr60. Catalysis depends on Lys64, which acts as the Proton acceptor. NADP(+) is bound at residue Asp76. Shikimate contacts are provided by Asn85 and Asp100. Residues 124 to 128 (GAGGA), 148 to 153 (NRTMSR), and Ile209 contribute to the NADP(+) site. Shikimate is bound at residue Tyr211. Gly232 lines the NADP(+) pocket.

Belongs to the shikimate dehydrogenase family. In terms of assembly, homodimer.

The catalysed reaction is shikimate + NADP(+) = 3-dehydroshikimate + NADPH + H(+). It functions in the pathway metabolic intermediate biosynthesis; chorismate biosynthesis; chorismate from D-erythrose 4-phosphate and phosphoenolpyruvate: step 4/7. Its function is as follows. Involved in the biosynthesis of the chorismate, which leads to the biosynthesis of aromatic amino acids. Catalyzes the reversible NADPH linked reduction of 3-dehydroshikimate (DHSA) to yield shikimate (SA). This Staphylococcus haemolyticus (strain JCSC1435) protein is Shikimate dehydrogenase (NADP(+)).